The chain runs to 146 residues: Putative esterase DR_2321 (146 aa).

It belongs to the thioesterase PaaI family.

The chain is Putative esterase DR_2321 from Deinococcus radiodurans (strain ATCC 13939 / DSM 20539 / JCM 16871 / CCUG 27074 / LMG 4051 / NBRC 15346 / NCIMB 9279 / VKM B-1422 / R1).